The chain runs to 986 residues: Ubiquitin carboxyl-terminal hydrolase 37 (986 aa).

The KEN box 1 signature appears at 32–34 (KDN). 2 short sequence motifs (D-box) span residues 71–79 (CLMLTLKDT) and 96–105 (RMYLDAVHQD). 2 disordered regions span residues 134–238 (NRQF…MSDP) and 251–305 (LKLK…KRSL). Residues 149–159 (VTVESKDETPF) are compositionally biased toward basic and acidic residues. Positions 160–168 (RKVLGTPAR) match the D-box 3 motif. Polar residues predominate over residues 171–195 (VKNSSGTGAPSNRVNVAASPTSSVP). Residues 224-226 (KEN) carry the KEN box 2 motif. Basic and acidic residues predominate over residues 251–260 (LKLKQEEENR). A compositionally biased stretch (low complexity) spans 269–298 (SSSYYGSRSSSKEYSTSSSTLDRSSVSSQT). Positions 344-958 (QGFSNLGNTC…SGYIFFYMHK (615 aa)) constitute a USP domain. The Nucleophile role is filled by Cys353. Disordered stretches follow at residues 683–710 (VQRG…GFDG) and 729–751 (SLSL…GDDE). The 20-residue stretch at 712 to 731 (SEDELLAAVLEISKREASLS) folds into the UIM 1 domain. The segment covering 729–739 (SLSLSHDEDKP) has biased composition (basic and acidic residues). A KEN box 3 motif is present at residues 789-791 (KEN). The interval 811 to 840 (REREEQELQQALAQSLQEQEAREQKEDDDL) is disordered. 2 consecutive UIM domains span residues 813–832 (REEQ…QEAR) and 835–854 (KEDD…FNSS). Low complexity predominate over residues 818 to 828 (LQQALAQSLQE). The segment covering 829-840 (QEAREQKEDDDL) has biased composition (basic and acidic residues). Residue His913 is the Proton acceptor of the active site.

Belongs to the peptidase C19 family.

It carries out the reaction Thiol-dependent hydrolysis of ester, thioester, amide, peptide and isopeptide bonds formed by the C-terminal Gly of ubiquitin (a 76-residue protein attached to proteins as an intracellular targeting signal).. Functionally, deubiquitinase that antagonizes the anaphase-promoting complex (APC/C) during G1/S transition by mediating deubiquitination of APC/C target proteins, thereby promoting S phase entry. Specifically mediates deubiquitination of 'Lys-11'-linked polyubiquitin chains, a specific ubiquitin-linkage type mediated by the APC/C complex. This is Ubiquitin carboxyl-terminal hydrolase 37 (USP37) from Gallus gallus (Chicken).